Here is a 492-residue protein sequence, read N- to C-terminus: Tyrosinase-like protein 1 (492 aa).

The N-terminal stretch at 1-22 is a signal peptide; sequence MDKMRTLQSLIVKLTLLYGALC. Positions 147, 155, 164, 289, 293, and 316 each coordinate Cu cation. The disordered stretch occupies residues 472–492; that stretch reads SEPPLQLEGPSFTSSFDDPRI. A compositionally biased stretch (polar residues) spans 482–492; the sequence is SFTSSFDDPRI.

Requires Cu(2+) as cofactor. Prismatic layer of shell (at protein level). Expressed primarily in the mantle with highest level in the mantle edge and lower level in the mantle pallium.

It localises to the secreted. This is Tyrosinase-like protein 1 from Margaritifera margaritifera (Freshwater pearl mussel).